The primary structure comprises 61 residues: Overexpressed in colon carcinoma 1 protein homolog (61 aa).

The span at 1–13 (MGCGNSTAASTTP) shows a compositional bias: polar residues. The segment at 1–61 (MGCGNSTAAS…AGQTASTHKE (61 aa)) is disordered. Basic and acidic residues predominate over residues 18-34 (SAKDVQDDSSMDEEKRR). Over residues 48–61 (TNETAGQTASTHKE) the composition is skewed to polar residues.

It belongs to the OCC1 family.

In Danio rerio (Zebrafish), this protein is Overexpressed in colon carcinoma 1 protein homolog (si:dkey-261e22.4).